The sequence spans 369 residues: MDQDALISKEDSEVEREASGGRESLSDVIGFLDAVLSSEPTDIGGDRSWLHNTINTLQRPGSTHRVKGEGEGEVSTSSTQDNRSGEESRVSGGTSEPEAEAHARNVDKQNIHWATGRGASTDSVPQDLGNGRDSGILEDPPNEGGYPRSGAEDENREMAANPDKRGEDQAEGLPEEIRRSAPLPDEREGRADNNGRGVEPGSPHSARVTGVLVIPSPELEEAVLQRNKRRPANSGSRSLTPVVVPSTRSPPPDHDNSTRSPPRKPPTTQDEHTNPRNTPAVRIKDRRPPTGTRSAPDRPTDGYPTHPSPETDATKKGHRREHIIYERDGYIVNESWCNPVCSRIRVVPRRELCVCKACPKICKLCRDGI.

Disordered stretches follow at residues M1–E23 and I54–R320. Composition is skewed to basic and acidic residues over residues I7–G20, A99–N110, G150–D168, and E175–N193. Phosphoserine; by host occurs at positions 249, 257, and 260. 8 residues coordinate Zn(2+): H318, C337, C341, C353, C355, C358, C362, and C365.

It belongs to the paramyxoviruses V protein family. As to quaternary structure, interacts with host IFIH1/MDA5 and DHX58/LGP2. Interacts with host IRF3. Interacts with host RIGI regulatory protein (via CARDs domain) and host TRIM25 (via SPRY domain); these interactions prevent TRIM25-mediated ubiquitination of RIG-I and disrupts downstream RIG-I signaling.

The protein localises to the host cytoplasm. Functionally, plays an essential role in the inhibition of host immune response. Prevents the establishment of cellular antiviral state by blocking interferon-alpha/beta (IFN-alpha/beta) production and signaling pathway. Interacts with host IFIH1/MDA5 and DHX58/LGP2 to inhibit the transduction pathway involved in the activation of IFN-beta promoter, thus protecting the virus against cell antiviral state. Also interacts with and inhibits host IRF3. Blocks the type I interferon signaling pathway by disrupting the RIG-I signaling pathway. In Cavia cutleri (Guinea pig), this protein is Protein V (P/V/C).